A 276-amino-acid polypeptide reads, in one-letter code: Bis(5'-nucleosyl)-tetraphosphatase, symmetrical (276 aa).

It belongs to the Ap4A hydrolase family.

It catalyses the reaction P(1),P(4)-bis(5'-adenosyl) tetraphosphate + H2O = 2 ADP + 2 H(+). Functionally, hydrolyzes diadenosine 5',5'''-P1,P4-tetraphosphate to yield ADP. This Psychromonas ingrahamii (strain DSM 17664 / CCUG 51855 / 37) protein is Bis(5'-nucleosyl)-tetraphosphatase, symmetrical.